The sequence spans 1178 residues: Zinc finger CCHC domain-containing protein 2 (1178 aa).

Disordered regions lie at residues 1 to 90 (MLRM…GPSA), 207 to 249 (AARG…RVGG), 557 to 683 (VTSA…SVNQ), and 936 to 986 (LSTA…SDST). Residues 43-67 (PPPPPPPPAGPSRGPLPPPPPPRGL) are compositionally biased toward pro residues. Gly residues predominate over residues 75 to 88 (AAAGAGMPGGGGGP). Over residues 208 to 219 (ARGEGSRGGAED) the composition is skewed to basic and acidic residues. Residues 220 to 229 (ERGEDGDGEQ) show a composition bias toward acidic residues. Position 236 is a phosphoserine (Ser-236). Over residues 580–594 (PQTEKEKIKKTDNRL) the composition is skewed to basic and acidic residues. The span at 595 to 607 (NSRINGIRLSTPQ) shows a compositional bias: polar residues. Residues 632 to 641 (SSESYSSPSS) show a composition bias toward low complexity. Residues 642-661 (PRHDGRESFESEEEKDRDTD) are compositionally biased toward basic and acidic residues. The span at 665-683 (EDSGNPSTTRFTGYGSVNQ) shows a compositional bias: polar residues. The span at 937 to 948 (STAATSPQPASA) shows a compositional bias: low complexity. Pro residues predominate over residues 959–973 (PAVPTHTPGPAPSPS). Polar residues predominate over residues 974–986 (PALTHSTAQSDST). A CCHC-type zinc finger spans residues 1131-1148 (VSCYNCGVSGHYAQDCKQ).

The chain is Zinc finger CCHC domain-containing protein 2 from Homo sapiens (Human).